The chain runs to 142 residues: Universal stress protein D (142 aa).

It belongs to the universal stress protein A family.

It is found in the cytoplasm. Functionally, required for resistance to DNA-damaging agents. In Escherichia coli O157:H7, this protein is Universal stress protein D (uspD).